Consider the following 811-residue polypeptide: Serine/threonine-protein kinase prpf4B (811 aa).

Disordered regions lie at residues Met1 to Pro257, Glu288 to Glu341, Lys353 to Lys379, and Val408 to Gly452. A compositionally biased stretch (low complexity) spans Ser46 to Arg71. The span at Arg81 to Asn202 shows a compositional bias: basic and acidic residues. Over residues Gly203–Tyr215 the composition is skewed to polar residues. A compositionally biased stretch (basic and acidic residues) spans Lys217–His240. Polar residues-rich tracts occupy residues Gly241–Pro257 and Glu293–Leu302. The segment covering Ser310–Ser327 has biased composition (low complexity). The Protein kinase domain occupies Tyr490 to Leu808. ATP contacts are provided by residues Ile496–Val504 and Lys519. Residue Asp619 is the Proton acceptor of the active site.

It belongs to the protein kinase superfamily. CMGC Ser/Thr protein kinase family. Phosphorylated. Autophosphorylated; phosphorylation inhibits interaction with its targets.

Its subcellular location is the nucleus. It localises to the chromosome. The protein resides in the centromere. It is found in the kinetochore. It carries out the reaction L-seryl-[protein] + ATP = O-phospho-L-seryl-[protein] + ADP + H(+). It catalyses the reaction L-threonyl-[protein] + ATP = O-phospho-L-threonyl-[protein] + ADP + H(+). Functionally, serine/threonine kinase involved in spliceosomal assembly as well as mitosis and signaling regulation. The protein is Serine/threonine-protein kinase prpf4B (prp4k) of Dictyostelium discoideum (Social amoeba).